We begin with the raw amino-acid sequence, 381 residues long: Chaperone protein DnaJ (381 aa).

In terms of domain architecture, J spans 5–70 (DFYEVLGVGR…QKKAAYDQYG (66 aa)). Residues 136–214 (GVSKEIEVPT…CHGQGRKQKT (79 aa)) form a CR-type zinc finger. Cysteine 149, cysteine 152, cysteine 166, cysteine 169, cysteine 188, cysteine 191, cysteine 202, and cysteine 205 together coordinate Zn(2+). 4 CXXCXGXG motif repeats span residues 149-156 (CDTCDGSG), 166-173 (CGTCHGHG), 188-195 (CPTCHGKG), and 202-209 (CNECHGQG).

It belongs to the DnaJ family. As to quaternary structure, homodimer. Zn(2+) is required as a cofactor.

The protein localises to the cytoplasm. In terms of biological role, participates actively in the response to hyperosmotic and heat shock by preventing the aggregation of stress-denatured proteins and by disaggregating proteins, also in an autonomous, DnaK-independent fashion. Unfolded proteins bind initially to DnaJ; upon interaction with the DnaJ-bound protein, DnaK hydrolyzes its bound ATP, resulting in the formation of a stable complex. GrpE releases ADP from DnaK; ATP binding to DnaK triggers the release of the substrate protein, thus completing the reaction cycle. Several rounds of ATP-dependent interactions between DnaJ, DnaK and GrpE are required for fully efficient folding. Also involved, together with DnaK and GrpE, in the DNA replication of plasmids through activation of initiation proteins. In Vibrio campbellii (strain ATCC BAA-1116), this protein is Chaperone protein DnaJ.